The following is a 173-amino-acid chain: NADH-ubiquinone oxidoreductase chain 6 (173 aa).

4 helical membrane passes run 24–44 (AMGL…GMFV), 47–67 (FWFS…LFIY), 81–101 (MKLF…SFFF), and 142–162 (LITL…VKIT).

It belongs to the complex I subunit 6 family.

The protein localises to the mitochondrion membrane. It carries out the reaction a ubiquinone + NADH + 5 H(+)(in) = a ubiquinol + NAD(+) + 4 H(+)(out). In terms of biological role, core subunit of the mitochondrial membrane respiratory chain NADH dehydrogenase (Complex I) that is believed to belong to the minimal assembly required for catalysis. Complex I functions in the transfer of electrons from NADH to the respiratory chain. The immediate electron acceptor for the enzyme is believed to be ubiquinone. The chain is NADH-ubiquinone oxidoreductase chain 6 from Aedes aegypti (Yellowfever mosquito).